We begin with the raw amino-acid sequence, 203 residues long: MSRYTGPSWKQSRRLGLSLTGTGKELARRNYVPGQHGPNNRSKLSEYGLQLAEKQKLRFSYGLGEKQFRNLFVQATKIKEGTLGFNFMILLERRLDNVVYRLGLATTRRQARQFVNHGHILVDGKRVDIPSYRVEPGQVISVREKSMKVPAILEAVEATLGRPAFVSFDAEKLEGSLTRLPERDEINPEINEALVVEFYNKML.

The S4 RNA-binding domain occupies 93-156 (RRLDNVVYRL…MKVPAILEAV (64 aa)).

The protein belongs to the universal ribosomal protein uS4 family. As to quaternary structure, part of the 30S ribosomal subunit. Contacts protein S5. The interaction surface between S4 and S5 is involved in control of translational fidelity.

Its function is as follows. One of the primary rRNA binding proteins, it binds directly to 16S rRNA where it nucleates assembly of the body of the 30S subunit. In terms of biological role, with S5 and S12 plays an important role in translational accuracy. This chain is Small ribosomal subunit protein uS4, found in Streptococcus uberis (strain ATCC BAA-854 / 0140J).